The primary structure comprises 239 residues: Carboxy-S-adenosyl-L-methionine synthase (239 aa).

Residues tyrosine 35, 64 to 66 (GCS), 88 to 89 (DN), and arginine 195 contribute to the S-adenosyl-L-methionine site.

The protein belongs to the class I-like SAM-binding methyltransferase superfamily. Cx-SAM synthase family. As to quaternary structure, homodimer.

The enzyme catalyses prephenate + S-adenosyl-L-methionine = carboxy-S-adenosyl-L-methionine + 3-phenylpyruvate + H2O. Functionally, catalyzes the conversion of S-adenosyl-L-methionine (SAM) to carboxy-S-adenosyl-L-methionine (Cx-SAM). This Helicobacter pylori (strain HPAG1) protein is Carboxy-S-adenosyl-L-methionine synthase.